A 933-amino-acid chain; its full sequence is Protein translocase subunit SecA (933 aa).

ATP is bound by residues Gln90, 108 to 112, and Asp504; that span reads GEGKT. Positions 539-570 are disordered; sequence GMGSNNRRPQGFGQDSKKKKWQPSADIFPTDL.

The protein belongs to the SecA family. Monomer and homodimer. Part of the essential Sec protein translocation apparatus which comprises SecA, SecYEG and auxiliary proteins SecDF. Other proteins may also be involved.

It is found in the cell inner membrane. The protein localises to the cellular thylakoid membrane. It localises to the cytoplasm. It carries out the reaction ATP + H2O + cellular proteinSide 1 = ADP + phosphate + cellular proteinSide 2.. Part of the Sec protein translocase complex. Interacts with the SecYEG preprotein conducting channel. Has a central role in coupling the hydrolysis of ATP to the transfer of proteins into and across the cell membrane, serving as an ATP-driven molecular motor driving the stepwise translocation of polypeptide chains across the membrane. In terms of biological role, probably participates in protein translocation into and across both the cytoplasmic and thylakoid membranes in cyanobacterial cells. In Crocosphaera subtropica (strain ATCC 51142 / BH68) (Cyanothece sp. (strain ATCC 51142)), this protein is Protein translocase subunit SecA.